The primary structure comprises 664 residues: Frizzled-3 (664 aa).

A signal peptide spans 1–16; that stretch reads MAAYLISFIWVSVILA. Over 17–204 the chain is Extracellular; it reads QKSMGHSLFA…REELSFARYF (188 aa). The region spanning 22-135 is the FZ domain; it reads HSLFACEPIT…CSRFPDCDEP (114 aa). 5 disulfides stabilise this stretch: Cys27-Cys88, Cys35-Cys81, Cys72-Cys109, Cys98-Cys132, and Cys102-Cys126. Residue Asn41 is glycosylated (N-linked (GlcNAc...) asparagine). Residues 205 to 225 traverse the membrane as a helical segment; that stretch reads IGVISIVCLSATLFTFLTFLI. Residues 226–236 lie on the Cytoplasmic side of the membrane; the sequence is DVTRFRYPERP. Residues 237–257 form a helical membrane-spanning segment; that stretch reads IIFYAVCYMMVSLIFFIGFLL. The Extracellular segment spans residues 258–287; it reads EDKVACNGANPSQYKASTVTQGSHNKACTM. A helical membrane pass occupies residues 288-308; sequence LFMVLYFFTMAGSVWWVILTI. Over 309–327 the chain is Cytoplasmic; that stretch reads TWFLAAVPKWGSEAIEKKA. Residues 328–348 traverse the membrane as a helical segment; sequence LLFHASAWGIPGTLTIILLAM. Over 349–373 the chain is Extracellular; it reads NKIEGDNISGVCFVGLYDVHALRYF. Asn355 carries N-linked (GlcNAc...) asparagine glycosylation. Residues 374-394 form a helical membrane-spanning segment; it reads VLAPLCLDVVVGVSLLLAGII. Over 395-419 the chain is Cytoplasmic; it reads SLNRVRIEIPLEKENQDKLVKFMIR. Residues 420–440 traverse the membrane as a helical segment; that stretch reads IGVFSILYLVPLLVVIGCYFY. The Extracellular segment spans residues 441–476; the sequence is EQAYRGVWETTWVQERCREYHIPCPYKVTQTSRPDL. Residues 477 to 497 form a helical membrane-spanning segment; it reads ILFLMKYLMLLVVGIPSVFWV. Residues 498–664 lie on the Cytoplasmic side of the membrane; it reads GSKKTCFEWA…RVIEADATSA (167 aa). A Lys-Thr-X-X-X-Trp motif, mediates interaction with the PDZ domain of Dvl family members motif is present at residues 501 to 506; the sequence is KTCFEW. Residues 537–664 form a disordered region; the sequence is RDPNTPIVRK…RVIEADATSA (128 aa). Polar residues-rich tracts occupy residues 549-564 and 573-585; these read GTST…STQL and KAGS…SSYH.

Belongs to the G-protein coupled receptor Fz/Smo family. As to expression, expression restricted to the early nervous system.

It localises to the membrane. It is found in the cell membrane. The protein localises to the cell surface. Its subcellular location is the apical cell membrane. Receptor for Wnt proteins. Most of frizzled receptors are coupled to the beta-catenin canonical signaling pathway, which leads to the activation of disheveled proteins, inhibition of GSK-3 kinase, nuclear accumulation of beta-catenin and activation of Wnt target genes. A second signaling pathway involving PKC and calcium fluxes has been seen for some family members, but it is not yet clear if it represents a distinct pathway or if it can be integrated in the canonical pathway, as PKC seems to be required for Wnt-mediated inactivation of GSK-3 kinase. Both pathways seem to involve interactions with G-proteins. Activated by Wnt8. Involved in transduction and intercellular transmission of polarity information during tissue morphogenesis and/or in differentiated tissues. Plays a role in controlling early axon growth and guidance processes necessary for the formation of a subset of central and peripheral major fiber tracts. Involved in the migration of cranial neural crest cells. May also be implicated in the transmission of sensory information from the trunk and limbs to the brain. Controls commissural sensory axons guidance after midline crossing along the anterior-posterior axis in the developing spinal cord in a Wnt-dependent signaling pathway. Together with FZD6, is involved in the neural tube closure and plays a role in the regulation of the establishment of planar cell polarity (PCP). Promotes neurogenesis by maintaining sympathetic neuroblasts within the cell cycle in a beta-catenin-dependent manner. This chain is Frizzled-3 (fzd3), found in Xenopus laevis (African clawed frog).